Reading from the N-terminus, the 212-residue chain is MGTNKPVVIGIAGGSGSGKTSVTKAIFDHFKGHSILILEQDYYYKDQSHLPMEERLKTNYDHPLAFDNDLLIEHLQQLLAYEQIDKPVYDYTLHTRSEEIIPVEPKDVIILEGILILEDPRLCELMDIKLFVDTDADLRILRRMQRDIKERGRTMDSVIDQYVTVVRPMHNQFIEPSKKFADIIIPEGGQNHVAIDIMVTKIATILEQKVNL.

13–20 (GGSGSGKT) lines the ATP pocket.

It belongs to the uridine kinase family.

It is found in the cytoplasm. It carries out the reaction uridine + ATP = UMP + ADP + H(+). The enzyme catalyses cytidine + ATP = CMP + ADP + H(+). It participates in pyrimidine metabolism; CTP biosynthesis via salvage pathway; CTP from cytidine: step 1/3. Its pathway is pyrimidine metabolism; UMP biosynthesis via salvage pathway; UMP from uridine: step 1/1. This chain is Uridine kinase, found in Bacillus cereus (strain G9842).